The following is a 196-amino-acid chain: NADPH:quinone oxidoreductase (196 aa).

It belongs to the SsuE family. As to quaternary structure, homotetramer. Requires FMN as cofactor.

The protein resides in the cell membrane. It carries out the reaction a quinone + NADH + H(+) = a quinol + NAD(+). The catalysed reaction is a quinone + NADPH + H(+) = a quinol + NADP(+). Functionally, the enzyme apparently serves as a quinone reductase in connection with conjugation reactions of hydroquinones involved in detoxification pathways. The chain is NADPH:quinone oxidoreductase (NQR) from Arabidopsis thaliana (Mouse-ear cress).